The primary structure comprises 482 residues: Anaerobic nitric oxide reductase flavorubredoxin (482 aa).

Residues 30-210 form a zinc metallo-hydrolase region; that stretch reads LRGSSYNSYL…PFSRLVTPKI (181 aa). Fe cation contacts are provided by His79, Glu81, Asp83, His147, Asp166, and His227. Positions 254–393 constitute a Flavodoxin-like domain; that stretch reads ITLFYDTMSN…ICRQHGREIA (140 aa). FMN contacts are provided by residues 260–264 and 342–369; these read TMSNN and AFGS…EMSM. The Rubredoxin-like domain maps to 426–477; the sequence is GPCMQCSVCQWVYDPALGEPLQDVAPGTPWSDVPDNFLCPECSLGKDVFDVL. 4 residues coordinate Fe cation: Cys431, Cys434, Cys464, and Cys467.

This sequence in the N-terminal section; belongs to the zinc metallo-hydrolase group 3 family. As to quaternary structure, homotetramer. It depends on Fe cation as a cofactor. FMN serves as cofactor.

The protein localises to the cytoplasm. It participates in nitrogen metabolism; nitric oxide reduction. In terms of biological role, anaerobic nitric oxide reductase; uses NADH to detoxify nitric oxide (NO), protecting several 4Fe-4S NO-sensitive enzymes. Has at least 2 reductase partners, only one of which (NorW, flavorubredoxin reductase) has been identified. NO probably binds to the di-iron center; electrons enter from the NorW at rubredoxin and are transferred sequentially to the FMN center and the di-iron center. Also able to function as an aerobic oxygen reductase. The sequence is that of Anaerobic nitric oxide reductase flavorubredoxin from Enterobacter sp. (strain 638).